Reading from the N-terminus, the 422-residue chain is Glutamate-1-semialdehyde 2,1-aminomutase (422 aa).

Lys258 carries the post-translational modification N6-(pyridoxal phosphate)lysine.

Belongs to the class-III pyridoxal-phosphate-dependent aminotransferase family. HemL subfamily. In terms of assembly, homodimer. The cofactor is pyridoxal 5'-phosphate.

It is found in the cytoplasm. The enzyme catalyses (S)-4-amino-5-oxopentanoate = 5-aminolevulinate. Its pathway is porphyrin-containing compound metabolism; protoporphyrin-IX biosynthesis; 5-aminolevulinate from L-glutamyl-tRNA(Glu): step 2/2. This chain is Glutamate-1-semialdehyde 2,1-aminomutase, found in Chlamydia trachomatis serovar D (strain ATCC VR-885 / DSM 19411 / UW-3/Cx).